The sequence spans 201 residues: MELVMKDAKSALEVSETTFGREFNEALVHQVVVAYAAGARQGTRAQLTRSEVSGGGKKPWRQKGTGRARAGSIRSPIWRSGGVTFAAKPQDHSQKVNKKMYRGAIRSILSELVRQERLIVVEKFGIEAPKTKELIAKLKEMELTDVLIVTAEVDENLFLAARNLYKVDVRDVAGIDPVSLIAFDKVLMTAEAVKQIEEMLA.

A disordered region spans residues 45–66; that stretch reads AQLTRSEVSGGGKKPWRQKGTG.

Belongs to the universal ribosomal protein uL4 family. In terms of assembly, part of the 50S ribosomal subunit.

In terms of biological role, one of the primary rRNA binding proteins, this protein initially binds near the 5'-end of the 23S rRNA. It is important during the early stages of 50S assembly. It makes multiple contacts with different domains of the 23S rRNA in the assembled 50S subunit and ribosome. Functionally, forms part of the polypeptide exit tunnel. The chain is Large ribosomal subunit protein uL4 from Aeromonas salmonicida (strain A449).